An 89-amino-acid polypeptide reads, in one-letter code: Small ribosomal subunit protein uS15c (89 aa).

It belongs to the universal ribosomal protein uS15 family. Part of the 30S ribosomal subunit.

It is found in the plastid. The chain is Small ribosomal subunit protein uS15c (rps15) from Aneura mirabilis (Parasitic liverwort).